Here is an 85-residue protein sequence, read N- to C-terminus: Large ribosomal subunit protein bL27 (85 aa).

It belongs to the bacterial ribosomal protein bL27 family.

The sequence is that of Large ribosomal subunit protein bL27 from Pseudomonas fluorescens (strain ATCC BAA-477 / NRRL B-23932 / Pf-5).